Reading from the N-terminus, the 249-residue chain is 3-deoxy-D-manno-octulosonic acid kinase (249 aa).

The active site involves Asp175.

The protein belongs to the protein kinase superfamily. KdkA/RfaP family.

Its subcellular location is the cell inner membrane. It carries out the reaction an alpha-Kdo-(2-&gt;6)-lipid IVA + ATP = a 4-O-phospho-alpha-Kdo-(2-&gt;6)-lipid IVA + ADP + H(+). It functions in the pathway bacterial outer membrane biogenesis; LPS core biosynthesis. Functionally, catalyzes the ATP-dependent phosphorylation of the 3-deoxy-D-manno-octulosonic acid (Kdo) residue in Kdo-lipid IV(A) at the 4-OH position. This chain is 3-deoxy-D-manno-octulosonic acid kinase, found in Stenotrophomonas maltophilia (strain R551-3).